A 430-amino-acid polypeptide reads, in one-letter code: Enolase (430 aa).

The sufficient for secretion stretch occupies residues 1 to 140 (MPYIVDVYAR…YQYLGGFNSK (140 aa)). Thr141 carries the post-translational modification Phosphothreonine. Residue Gln163 participates in (2R)-2-phosphoglycerate binding. Catalysis depends on Glu205, which acts as the Proton donor. Asp242 is a binding site for Mg(2+). At Ser259 the chain carries Phosphoserine. Phosphotyrosine is present on Tyr281. Positions 287 and 314 each coordinate Mg(2+). Residue Ser325 is modified to Phosphoserine. Residues Lys339, Arg368, Ser369, and Lys390 each coordinate (2R)-2-phosphoglycerate. Lys339 serves as the catalytic Proton acceptor.

It belongs to the enolase family. In terms of assembly, homooctamer. Component of the RNA degradosome complex composed of rny, rnjA, rnjB, pnp, pfkA and eno (although rnjA and rnjB's presence is controversial). Mg(2+) serves as cofactor. Post-translationally, phosphorylated during sporulation.

Its subcellular location is the cytoplasm. The protein resides in the secreted. The protein localises to the cell surface. The enzyme catalyses (2R)-2-phosphoglycerate = phosphoenolpyruvate + H2O. It participates in carbohydrate degradation; glycolysis; pyruvate from D-glyceraldehyde 3-phosphate: step 4/5. With respect to regulation, covalent binding to the substrate (probably 2-PG) at Lys-339 of a small fraction of enolase causes inactivation of the enzyme, and possibly serves as a signal for the export of the protein. Citrate acts as a non-competitive inhibitor for both forward and reverse reactions, probably by chelating Mg(2+). In terms of biological role, catalyzes the reversible conversion of 2-phosphoglycerate (2-PG) into phosphoenolpyruvate (PEP). It is essential for the degradation of carbohydrates via glycolysis. Its function is as follows. A component of the RNA degradosome, a multi-enzyme complex involved in RNA processing and messenger RNA degradation. This Bacillus subtilis (strain 168) protein is Enolase.